We begin with the raw amino-acid sequence, 312 residues long: Olfactory receptor 51B6 (312 aa).

The Extracellular segment spans residues 1–23 (MGLNKSASTFQLTGFPGMEKAHH). N4 carries an N-linked (GlcNAc...) asparagine glycan. The chain crosses the membrane as a helical span at residues 24–44 (WIFIPLLAAYISILLGNGTLL). At 45-52 (FLIRNDHN) the chain is on the cytoplasmic side. Residues 53 to 73 (LHEPMYYFLAMLAATDLGVTL) traverse the membrane as a helical segment. The Extracellular segment spans residues 74–97 (TTMPTVLGVLWLDHREIGHGACFS). Residues C95 and C187 are joined by a disulfide bond. The chain crosses the membrane as a helical span at residues 98 to 118 (QAYFIHTLSVMESGVLLAMAY). At 119 to 137 (DCFITIRSPLRYTSILTNT) the chain is on the cytoplasmic side. The helical transmembrane segment at 138-158 (QVMKIGVRVLTRAGLSIMPIV) threads the bilayer. At 159–194 (VRLHWFPYCRSHVLSHAFCLHQDVIKLACADITFNR) the chain is on the extracellular side. Residues 195 to 215 (LYPVVVLFAMVLLDFLIIFFS) form a helical membrane-spanning segment. The Cytoplasmic portion of the chain corresponds to 216–235 (YILILKTVMGIGSGGERAKA). The chain crosses the membrane as a helical span at residues 236-256 (LNTCVSHICCILVFYVTVVCL). Residues 257-271 (TFIHRFGKHVPHVVH) are Extracellular-facing. Residues 272–292 (ITMSYIHFLFPPFMNPFIYSI) traverse the membrane as a helical segment. Residues 293–312 (KTKQIQSGILRLFSLPHSRA) are Cytoplasmic-facing.

Belongs to the G-protein coupled receptor 1 family.

It localises to the cell membrane. Odorant receptor. The chain is Olfactory receptor 51B6 (OR51B6) from Homo sapiens (Human).